The primary structure comprises 510 residues: Probable lipid II flippase MurJ (510 aa).

12 consecutive transmembrane segments (helical) span residues 13–33, 81–101, 130–150, 154–174, 182–202, 240–260, 266–286, 315–335, 357–377, 396–416, 443–463, and 481–501; these read DVVI…LFAN, GLVS…AALF, FPYL…NTIG, VMSF…LFLA, LALA…QIPF, INLL…ISWL, LLEF…LPTL, IFLL…PMLL, AFNA…GYYA, MGFN…ASAM, VFFV…WYYV, and LVWL…LLGV.

It belongs to the MurJ/MviN family.

The protein resides in the cell inner membrane. It functions in the pathway cell wall biogenesis; peptidoglycan biosynthesis. Functionally, involved in peptidoglycan biosynthesis. Transports lipid-linked peptidoglycan precursors from the inner to the outer leaflet of the cytoplasmic membrane. The polypeptide is Probable lipid II flippase MurJ (Haemophilus influenzae (strain ATCC 51907 / DSM 11121 / KW20 / Rd)).